The primary structure comprises 84 residues: Protein myomixer (84 aa).

Over 1-4 (MPTP) the chain is Cytoplasmic. Residues 5–25 (LLPLLLRLLLSCLLLPAARLA) form a helical membrane-spanning segment. Residues 26-84 (RQYLLPLLRRLARRLGSQDMREALLGCLLFILSQRHSPDAGEASRVDRLERRERLGPQK) are Extracellular-facing. The AxLyCxL signature appears at 48 to 57 (ALLGCLLFIL). The interval 62–84 (SPDAGEASRVDRLERRERLGPQK) is disordered.

It belongs to the MYMX family. Interacts with MYMK.

It is found in the cell membrane. Functionally, myoblast-specific protein that mediates myoblast fusion, an essential step for the formation of multi-nucleated muscle fibers. Involved in membrane fusion downstream of the lipid mixing step mediated by MYMK. Acts by generating membrane stresses via its extracellular C-terminus, leading to drive fusion pore formation. Acts independently of MYMK. Involved in skeletal muscle regeneration in response to injury by mediating the fusion of satellite cells, a population of muscle stem cells, with injured myofibers. This Homo sapiens (Human) protein is Protein myomixer.